Consider the following 102-residue polypeptide: Integration host factor subunit beta (102 aa).

This sequence belongs to the bacterial histone-like protein family. In terms of assembly, heterodimer of an alpha and a beta chain.

In terms of biological role, this protein is one of the two subunits of integration host factor, a specific DNA-binding protein that functions in genetic recombination as well as in transcriptional and translational control. The protein is Integration host factor subunit beta (ihfB) of Rhizobium radiobacter (Agrobacterium tumefaciens).